The chain runs to 202 residues: Large ribosomal subunit protein uL4 (202 aa).

The span at G42–V52 shows a compositional bias: polar residues. A disordered region spans residues G42 to G70.

This sequence belongs to the universal ribosomal protein uL4 family. In terms of assembly, part of the 50S ribosomal subunit.

One of the primary rRNA binding proteins, this protein initially binds near the 5'-end of the 23S rRNA. It is important during the early stages of 50S assembly. It makes multiple contacts with different domains of the 23S rRNA in the assembled 50S subunit and ribosome. Functionally, forms part of the polypeptide exit tunnel. The polypeptide is Large ribosomal subunit protein uL4 (Xylella fastidiosa (strain Temecula1 / ATCC 700964)).